Consider the following 1203-residue polypeptide: DNA-directed RNA polymerase subunit beta' (1203 aa).

Positions 60, 62, 75, and 78 each coordinate Zn(2+). Mg(2+) contacts are provided by Asp449, Asp451, and Asp453. Residues Cys818, Cys892, Cys899, and Cys902 each contribute to the Zn(2+) site.

Belongs to the RNA polymerase beta' chain family. In terms of assembly, the RNAP catalytic core consists of 2 alpha, 1 beta, 1 beta' and 1 omega subunit. When a sigma factor is associated with the core the holoenzyme is formed, which can initiate transcription. Requires Mg(2+) as cofactor. Zn(2+) is required as a cofactor.

The catalysed reaction is RNA(n) + a ribonucleoside 5'-triphosphate = RNA(n+1) + diphosphate. DNA-dependent RNA polymerase catalyzes the transcription of DNA into RNA using the four ribonucleoside triphosphates as substrates. In Bacillus mycoides (strain KBAB4) (Bacillus weihenstephanensis), this protein is DNA-directed RNA polymerase subunit beta'.